Consider the following 417-residue polypeptide: NADH-quinone oxidoreductase subunit D (417 aa).

This sequence belongs to the complex I 49 kDa subunit family. As to quaternary structure, NDH-1 is composed of 14 different subunits. Subunits NuoB, C, D, E, F, and G constitute the peripheral sector of the complex.

The protein resides in the cell inner membrane. The enzyme catalyses a quinone + NADH + 5 H(+)(in) = a quinol + NAD(+) + 4 H(+)(out). Functionally, NDH-1 shuttles electrons from NADH, via FMN and iron-sulfur (Fe-S) centers, to quinones in the respiratory chain. The immediate electron acceptor for the enzyme in this species is believed to be ubiquinone. Couples the redox reaction to proton translocation (for every two electrons transferred, four hydrogen ions are translocated across the cytoplasmic membrane), and thus conserves the redox energy in a proton gradient. In Paracidovorax citrulli (strain AAC00-1) (Acidovorax citrulli), this protein is NADH-quinone oxidoreductase subunit D.